A 412-amino-acid chain; its full sequence is Tyrosine--tRNA ligase (412 aa).

Tyrosine 41 contributes to the L-tyrosine binding site. The 'HIGH' region signature appears at alanine 46 to histidine 55. 2 residues coordinate L-tyrosine: tyrosine 174 and glutamine 178. Residues lysine 234–serine 238 carry the 'KMSKS' region motif. Lysine 237 provides a ligand contact to ATP. The region spanning leucine 348 to glutamate 411 is the S4 RNA-binding domain.

This sequence belongs to the class-I aminoacyl-tRNA synthetase family. TyrS type 1 subfamily. As to quaternary structure, homodimer.

It localises to the cytoplasm. It carries out the reaction tRNA(Tyr) + L-tyrosine + ATP = L-tyrosyl-tRNA(Tyr) + AMP + diphosphate + H(+). Functionally, catalyzes the attachment of tyrosine to tRNA(Tyr) in a two-step reaction: tyrosine is first activated by ATP to form Tyr-AMP and then transferred to the acceptor end of tRNA(Tyr). In Pseudomonas aeruginosa (strain LESB58), this protein is Tyrosine--tRNA ligase.